The following is an 88-amino-acid chain: Putative membrane protein insertion efficiency factor (88 aa).

This sequence belongs to the UPF0161 family.

It is found in the cell inner membrane. In terms of biological role, could be involved in insertion of integral membrane proteins into the membrane. The chain is Putative membrane protein insertion efficiency factor from Prochlorococcus marinus (strain MIT 9313).